Here is a 481-residue protein sequence, read N- to C-terminus: Glutamate--tRNA ligase (481 aa).

The 'HIGH' region motif lies at 9–19 (PSPTGNLHIGT). Positions 247–251 (KLSKR) match the 'KMSKS' region motif. Position 250 (K250) interacts with ATP.

The protein belongs to the class-I aminoacyl-tRNA synthetase family. Glutamate--tRNA ligase type 1 subfamily. In terms of assembly, monomer.

The protein localises to the cytoplasm. It carries out the reaction tRNA(Glu) + L-glutamate + ATP = L-glutamyl-tRNA(Glu) + AMP + diphosphate. Functionally, catalyzes the attachment of glutamate to tRNA(Glu) in a two-step reaction: glutamate is first activated by ATP to form Glu-AMP and then transferred to the acceptor end of tRNA(Glu). This Nostoc punctiforme (strain ATCC 29133 / PCC 73102) protein is Glutamate--tRNA ligase.